Here is a 314-residue protein sequence, read N- to C-terminus: Olfactory receptor 52K2 (314 aa).

Over 1-27 (MSASNITLTHPTAFLLVGIPGLEHLHI) the chain is Extracellular. A glycan (N-linked (GlcNAc...) asparagine) is linked at N5. Residues 28–48 (WISIPFCLAYTLALLGNCTLL) traverse the membrane as a helical segment. At 49-56 (LIIQADAA) the chain is on the cytoplasmic side. Residues 57 to 77 (LHEPMYLFLAMLAAIDLVLSS) form a helical membrane-spanning segment. Residues 78 to 101 (SALPKMLAIFWFRDREINFFACLA) lie on the Extracellular side of the membrane. A disulfide bridge links C99 with C191. A helical membrane pass occupies residues 102–122 (QMFFLHSFSIMESAVLLAMAF). Topologically, residues 123-141 (DRYVAICKPLHYTKVLTGS) are cytoplasmic. A helical transmembrane segment spans residues 142 to 162 (LITKIGMAAVARAVTLMTPLP). Topologically, residues 163–198 (FLLRCFHYCRGPVIAHCYCEHMAVVRLACGDTSFNN) are extracellular. Residues 199 to 219 (IYGIAVAMFIVVLDLLLVILS) traverse the membrane as a helical segment. Topologically, residues 220-239 (YIFILQAVLLLASQEARYKA) are cytoplasmic. The chain crosses the membrane as a helical span at residues 240–260 (FGTCVSHIGAILAFYTTVVIS). At 261 to 275 (SVMHRVARHAAPHVH) the chain is on the extracellular side. A helical membrane pass occupies residues 276-296 (ILLANFYLLFPPMVNPIIYGV). The Cytoplasmic portion of the chain corresponds to 297–314 (KTKQIRESILGVFPRKDM).

Belongs to the G-protein coupled receptor 1 family.

The protein resides in the cell membrane. Functionally, odorant receptor. This Homo sapiens (Human) protein is Olfactory receptor 52K2 (OR52K2).